We begin with the raw amino-acid sequence, 579 residues long: Threonylcarbamoyladenosine tRNA methylthiotransferase (579 aa).

Serine 53 is modified (phosphoserine). Positions 64–172 constitute an MTTase N-terminal domain; the sequence is QKIWIRTWGC…VVEVVEETIK (109 aa). [4Fe-4S] cluster contacts are provided by cysteine 73 and cysteine 109. Serine 122 bears the Phosphoserine mark. The [4Fe-4S] cluster site is built by cysteine 138, cysteine 214, cysteine 218, and cysteine 221. The region spanning 200-431 is the Radical SAM core domain; that stretch reads RKNPLIEIIS…RVFHSYSPYD (232 aa). The TRAM domain maps to 431-493; that stretch reads DHKIGERQQV…KHFMKGQPVS (63 aa). At threonine 499 the chain carries Phosphothreonine. A helical membrane pass occupies residues 556 to 578; that stretch reads CALRMSVGLALLGLLFAFFVKVY.

This sequence belongs to the methylthiotransferase family. CDKAL1 subfamily. Requires [4Fe-4S] cluster as cofactor. In terms of tissue distribution, expressed in pancreatic islets.

The protein resides in the endoplasmic reticulum membrane. The catalysed reaction is N(6)-L-threonylcarbamoyladenosine(37) in tRNA + (sulfur carrier)-SH + AH2 + 2 S-adenosyl-L-methionine = 2-methylsulfanyl-N(6)-L-threonylcarbamoyladenosine(37) in tRNA + (sulfur carrier)-H + 5'-deoxyadenosine + L-methionine + A + S-adenosyl-L-homocysteine + 2 H(+). Catalyzes the methylthiolation of N6-threonylcarbamoyladenosine (t(6)A), leading to the formation of 2-methylthio-N6-threonylcarbamoyladenosine (ms(2)t(6)A) at position 37 in tRNAs that read codons beginning with adenine. This chain is Threonylcarbamoyladenosine tRNA methylthiotransferase (CDKAL1), found in Homo sapiens (Human).